We begin with the raw amino-acid sequence, 77 residues long: Translation initiation factor IF-1, chloroplastic (77 aa).

In terms of domain architecture, S1-like spans 1 to 71; that stretch reads MKEQKWIHEG…SRGRIIYRLR (71 aa).

Belongs to the IF-1 family. Component of the 30S ribosomal translation pre-initiation complex which assembles on the 30S ribosome in the order IF-2 and IF-3, IF-1 and N-formylmethionyl-tRNA(fMet); mRNA recruitment can occur at any time during PIC assembly.

The protein resides in the plastid. It is found in the chloroplast. Its function is as follows. One of the essential components for the initiation of protein synthesis. Stabilizes the binding of IF-2 and IF-3 on the 30S subunit to which N-formylmethionyl-tRNA(fMet) subsequently binds. Helps modulate mRNA selection, yielding the 30S pre-initiation complex (PIC). Upon addition of the 50S ribosomal subunit IF-1, IF-2 and IF-3 are released leaving the mature 70S translation initiation complex. This chain is Translation initiation factor IF-1, chloroplastic, found in Buxus microphylla (Littleleaf boxwood).